The primary structure comprises 313 residues: tRNA uridine(34) hydroxylase (313 aa).

Residues 127 to 225 form the Rhodanese domain; sequence SDPDTILIDT…YLETVPEEES (99 aa). Cys185 (cysteine persulfide intermediate) is an active-site residue.

It belongs to the TrhO family.

The catalysed reaction is uridine(34) in tRNA + AH2 + O2 = 5-hydroxyuridine(34) in tRNA + A + H2O. Functionally, catalyzes oxygen-dependent 5-hydroxyuridine (ho5U) modification at position 34 in tRNAs. In Gluconobacter oxydans (strain 621H) (Gluconobacter suboxydans), this protein is tRNA uridine(34) hydroxylase.